Consider the following 473-residue polypeptide: MDMPPTPLPPETANTSPAPNGATAGIRVENCYVFKSRLQEYAQKAGLQTPEYHTFKEGPSHEPVFKSTVVINNTSYDSLPGFFNRKAAEQSAAEVALMEIVKSIPANANIPAVQETGLCKNLLQEYAQKMNYAIPSYICTKSASGLAPFICTVEIGGIQYIGAAARTKKDAEIKAARTALLAIQGQSEGSANGATKYIVVPGKRVGKEVEKMPIETPKPLKIKKGGFKKKWNKRKFMKKDGQAVVEKDEARVAGDAHDSDVLMQPTVITQEASCGTLFLQPCEEAKRVEAEPPRDIEMVQPDKENQHSDAALVQPDDEARVEQEPSRDISVVPPNEEAISVKQEPSIDAAILQPKEEASSVKQEPFIDTAMLQACKEAGSVELGPARDTVISQLNEQDRGVKQEPAGDTAVPQPDVDARVVKEESPRTEPNGEATNMKETPKNSAVCNSPETKEFGDITAMGSDPPATNMSEE.

Residues 1–10 show a composition bias toward pro residues; sequence MDMPPTPLPP. A disordered region spans residues 1-22; sequence MDMPPTPLPPETANTSPAPNGA. 2 consecutive DRBM domains span residues 33-102 and 118-185; these read VFKS…EIVK and LCKN…AIQG. Basic and acidic residues-rich tracts occupy residues 286 to 307, 317 to 327, and 416 to 427; these read KRVE…ENQH, DEARVEQEPSR, and VDARVVKEESPR. Disordered regions lie at residues 286 to 329 and 393 to 473; these read KRVE…SRDI and QLNE…MSEE. Positions 433–450 are enriched in polar residues; it reads EATNMKETPKNSAVCNSP.

Its function is as follows. Binds double-stranded RNA. This Oryza sativa subsp. japonica (Rice) protein is Double-stranded RNA-binding protein 7 (DRB7).